The following is a 188-amino-acid chain: Small ribosomal subunit protein uS7 (188 aa).

The protein belongs to the universal ribosomal protein uS7 family. In terms of assembly, part of the 30S ribosomal subunit.

Its function is as follows. One of the primary rRNA binding proteins, it binds directly to 16S rRNA where it nucleates assembly of the head domain of the 30S subunit. Is located at the subunit interface close to the decoding center. The protein is Small ribosomal subunit protein uS7 of Methanococcus maripaludis (strain C7 / ATCC BAA-1331).